We begin with the raw amino-acid sequence, 246 residues long: Uridylate kinase (246 aa).

11 to 14 (KLSG) serves as a coordination point for ATP. Glycine 53 is a binding site for UMP. ATP is bound by residues glycine 54 and arginine 58. Residues aspartate 73 and 134–141 (TGNPYFTT) contribute to the UMP site. The ATP site is built by threonine 161, tyrosine 167, and aspartate 170.

Belongs to the UMP kinase family. Homohexamer.

It localises to the cytoplasm. It catalyses the reaction UMP + ATP = UDP + ADP. It functions in the pathway pyrimidine metabolism; CTP biosynthesis via de novo pathway; UDP from UMP (UMPK route): step 1/1. Its activity is regulated as follows. Inhibited by UTP. Functionally, catalyzes the reversible phosphorylation of UMP to UDP. The chain is Uridylate kinase from Leptospira borgpetersenii serovar Hardjo-bovis (strain JB197).